The chain runs to 320 residues: Very-long-chain 3-oxoacyl-CoA reductase (320 aa).

The helical transmembrane segment at 17–37 (FWYLGVVAAVWWGLRAAWCLL) threads the bilayer. 56–85 (GKWAVVTGATDGIGKAYAEELAKRGMNIVL) contacts NADP(+). 2 consecutive transmembrane segments (helical) span residues 189 to 209 (GVIL…LTVY) and 283 to 303 (AIMG…SLGM). Substrate is bound at residue Ser-196. The active-site Proton acceptor is Tyr-209.

Belongs to the short-chain dehydrogenases/reductases (SDR) family. 17-beta-HSD 3 subfamily.

It is found in the endoplasmic reticulum membrane. The enzyme catalyses a very-long-chain (3R)-3-hydroxyacyl-CoA + NADP(+) = a very-long-chain 3-oxoacyl-CoA + NADPH + H(+). It carries out the reaction 17beta-estradiol + NAD(+) = estrone + NADH + H(+). The catalysed reaction is 17beta-estradiol + NADP(+) = estrone + NADPH + H(+). It catalyses the reaction 3-oxooctadecanoyl-CoA + NADPH + H(+) = (3R)-hydroxyoctadecanoyl-CoA + NADP(+). The enzyme catalyses (7Z,10Z,13Z,16Z)-3-oxodocosatetraenoyl-CoA + NADPH + H(+) = (3R)-hydroxy-(7Z,10Z,13Z,16Z)-docosatetraenoyl-CoA + NADP(+). It carries out the reaction 3-oxo-(7Z,10Z,13Z,16Z,19Z)-docosapentaenoyl-CoA + NADPH + H(+) = (3R)-hydroxy-(7Z,10Z,13Z,16Z,19Z)-docosapentaenoyl-CoA + NADP(+). The catalysed reaction is (8Z,11Z,14Z)-3-oxoeicosatrienoyl-CoA + NADPH + H(+) = (3R)-hydroxy-(8Z,11Z,14Z)-eicosatrienoyl-CoA + NADP(+). The protein operates within lipid metabolism; fatty acid biosynthesis. Its pathway is steroid biosynthesis; estrogen biosynthesis. Its function is as follows. Catalyzes the second of the four reactions of the long-chain fatty acids elongation cycle. This endoplasmic reticulum-bound enzymatic process, allows the addition of two carbons to the chain of long- and very long-chain fatty acids/VLCFAs per cycle. This enzyme has a 3-ketoacyl-CoA reductase activity, reducing 3-ketoacyl-CoA to 3-hydroxyacyl-CoA, within each cycle of fatty acid elongation. Thereby, it may participate in the production of VLCFAs of different chain lengths that are involved in multiple biological processes as precursors of membrane lipids and lipid mediators. May also catalyze the transformation of estrone (E1) into estradiol (E2) and play a role in estrogen formation. The protein is Very-long-chain 3-oxoacyl-CoA reductase (hsd17b12) of Xenopus tropicalis (Western clawed frog).